The primary structure comprises 153 residues: Ribonuclease H (153 aa).

Positions 1 to 141 (MKHIEIYTDG…CDVLARDAAS (141 aa)) constitute an RNase H type-1 domain. 4 residues coordinate Mg(2+): D9, E47, D69, and D133.

It belongs to the RNase H family. In terms of assembly, monomer. The cofactor is Mg(2+).

It is found in the cytoplasm. It catalyses the reaction Endonucleolytic cleavage to 5'-phosphomonoester.. Functionally, endonuclease that specifically degrades the RNA of RNA-DNA hybrids. The polypeptide is Ribonuclease H (Pseudoalteromonas atlantica (strain T6c / ATCC BAA-1087)).